The following is a 449-amino-acid chain: Glucose-6-phosphate isomerase (449 aa).

The active-site Proton donor is the Glu-291. Catalysis depends on residues His-312 and Lys-426.

Belongs to the GPI family.

It is found in the cytoplasm. It carries out the reaction alpha-D-glucose 6-phosphate = beta-D-fructose 6-phosphate. It participates in carbohydrate biosynthesis; gluconeogenesis. It functions in the pathway carbohydrate degradation; glycolysis; D-glyceraldehyde 3-phosphate and glycerone phosphate from D-glucose: step 2/4. Functionally, catalyzes the reversible isomerization of glucose-6-phosphate to fructose-6-phosphate. This Streptococcus pyogenes serotype M18 (strain MGAS8232) protein is Glucose-6-phosphate isomerase.